A 109-amino-acid polypeptide reads, in one-letter code: uncharacterized protein (109 aa).

Transmembrane regions (helical) follow at residues His-16 to Phe-36, Leu-52 to Leu-72, and Ile-87 to Val-107.

The protein resides in the cell membrane. This is an uncharacterized protein from Salmonella typhimurium (strain LT2 / SGSC1412 / ATCC 700720).